Consider the following 167-residue polypeptide: Leukotoxin-activating lysine-acyltransferase LktC serotype A11 (167 aa).

Catalysis depends on residues H22 and D91.

The protein belongs to the RTX toxin acyltransferase family.

It localises to the cytoplasm. It catalyses the reaction a fatty acyl-[ACP] + L-lysyl-[protein] = N(6)-(fatty acyl)-L-lysyl-[protein] + holo-[ACP] + H(+). Its function is as follows. Involved in fatty acylation of the protoxin (LktA) at two internal lysine residues, thereby converting it to the active toxin. This chain is Leukotoxin-activating lysine-acyltransferase LktC serotype A11 (lktC), found in Mannheimia haemolytica (Pasteurella haemolytica).